The sequence spans 102 residues: Large ribosomal subunit protein bL21 (102 aa).

The protein belongs to the bacterial ribosomal protein bL21 family. In terms of assembly, part of the 50S ribosomal subunit. Contacts protein L20.

In terms of biological role, this protein binds to 23S rRNA in the presence of protein L20. In Cutibacterium acnes (strain DSM 16379 / KPA171202) (Propionibacterium acnes), this protein is Large ribosomal subunit protein bL21.